Here is a 198-residue protein sequence, read N- to C-terminus: Glycerol-3-phosphate acyltransferase (198 aa).

A run of 5 helical transmembrane segments spans residues 4–24, 53–75, 80–102, 112–132, and 134–154; these read LALIMIIIAYLLGSISSAVLI, SAAGLVLLCDILKGMLPVWGGYF, PFMLGIIAISACLGHMYPLFFHF, LGALAPIGLDLTGMLFGCWVV, and VLVTGYSSLASMITALLAPLF.

The protein belongs to the PlsY family. In terms of assembly, probably interacts with PlsX.

The protein resides in the cell inner membrane. It catalyses the reaction an acyl phosphate + sn-glycerol 3-phosphate = a 1-acyl-sn-glycero-3-phosphate + phosphate. The protein operates within lipid metabolism; phospholipid metabolism. Its function is as follows. Catalyzes the transfer of an acyl group from acyl-phosphate (acyl-PO(4)) to glycerol-3-phosphate (G3P) to form lysophosphatidic acid (LPA). This enzyme utilizes acyl-phosphate as fatty acyl donor, but not acyl-CoA or acyl-ACP. The protein is Glycerol-3-phosphate acyltransferase of Aliivibrio fischeri (strain ATCC 700601 / ES114) (Vibrio fischeri).